The following is a 216-amino-acid chain: Large ribosomal subunit protein uL24m (216 aa).

The N-terminal 9 residues, 1-9 (MRLSALLAL), are a transit peptide targeting the mitochondrion. Ser24 is subject to Phosphoserine. The KOW domain occupies 56 to 89 (LFCGDTVEILEGKDAGKQGKVVQVIRQRNWVVVG).

This sequence belongs to the universal ribosomal protein uL24 family. In terms of assembly, component of the mitochondrial large ribosomal subunit (mt-LSU). Mature mammalian 55S mitochondrial ribosomes consist of a small (28S) and a large (39S) subunit. The 28S small subunit contains a 12S ribosomal RNA (12S mt-rRNA) and 30 different proteins. The 39S large subunit contains a 16S rRNA (16S mt-rRNA), a copy of mitochondrial valine transfer RNA (mt-tRNA(Val)), which plays an integral structural role, and 52 different proteins.

Its subcellular location is the mitochondrion. This Homo sapiens (Human) protein is Large ribosomal subunit protein uL24m (MRPL24).